Reading from the N-terminus, the 319-residue chain is ATP-dependent 6-phosphofructokinase (319 aa).

G11 lines the ATP pocket. 21-25 serves as a coordination point for ADP; the sequence is RAVVR. ATP is bound by residues 72–73 and 102–105; these read RS and GDGS. D103 is a binding site for Mg(2+). 125–127 contacts substrate; that stretch reads TID. D127 (proton acceptor) is an active-site residue. Residue R154 coordinates ADP. Residues R162 and 169–171 contribute to the substrate site; that span reads MGR. Residues 185–187 and 213–215 contribute to the ADP site; these read GAE and KMH. Residues E222, R243, and 249–252 contribute to the substrate site; that span reads HIQR.

This sequence belongs to the phosphofructokinase type A (PFKA) family. ATP-dependent PFK group I subfamily. Prokaryotic clade 'B1' sub-subfamily. As to quaternary structure, homotetramer. Mg(2+) serves as cofactor.

It is found in the cytoplasm. It catalyses the reaction beta-D-fructose 6-phosphate + ATP = beta-D-fructose 1,6-bisphosphate + ADP + H(+). Its pathway is carbohydrate degradation; glycolysis; D-glyceraldehyde 3-phosphate and glycerone phosphate from D-glucose: step 3/4. Its activity is regulated as follows. Allosterically activated by ADP and other diphosphonucleosides, and allosterically inhibited by phosphoenolpyruvate. Its function is as follows. Catalyzes the phosphorylation of D-fructose 6-phosphate to fructose 1,6-bisphosphate by ATP, the first committing step of glycolysis. The polypeptide is ATP-dependent 6-phosphofructokinase (Clostridium tetani (strain Massachusetts / E88)).